The primary structure comprises 832 residues: Elongation factor 2 (832 aa).

Positions 17 to 336 constitute a tr-type G domain; sequence HNIRNMSVIA…MIVTHLPSPA (320 aa). 26–33 is a binding site for GTP; it reads AHVDHGKS. 2 positions are modified to phosphothreonine: Thr-57 and Thr-59. Residues 152–155 and 207–209 each bind GTP; these read NKVD and SGL. The tract at residues 580–608 is disordered; the sequence is AEPLPDGLTDDIEEGKVSPRDDPKERSNL. The segment covering 593 to 608 has biased composition (basic and acidic residues); sequence EGKVSPRDDPKERSNL. His-689 carries the diphthamide modification.

It belongs to the TRAFAC class translation factor GTPase superfamily. Classic translation factor GTPase family. EF-G/EF-2 subfamily.

The protein localises to the cytoplasm. It catalyses the reaction GTP + H2O = GDP + phosphate + H(+). Functionally, catalyzes the GTP-dependent ribosomal translocation step during translation elongation. During this step, the ribosome changes from the pre-translocational (PRE) to the post-translocational (POST) state as the newly formed A-site-bound peptidyl-tRNA and P-site-bound deacylated tRNA move to the P and E sites, respectively. Catalyzes the coordinated movement of the two tRNA molecules, the mRNA and conformational changes in the ribosome. In Cryptosporidium parvum, this protein is Elongation factor 2.